The sequence spans 300 residues: MSGRFSRSIYVGNLPGDIREHEIEDIFYKYGRIVDIELKVPPRPPCYCFVEFEHSRDAEDAIKGRDGYNLDGCRLRVELAHGGRGQSSSDRRGGYGGGGSGYGGGGGGGGSARFGVSRHSEFRVIVRGLPSSASWQDLKDHMRKAGDVCFAEVTRDSDGTYGVVDYTNYDDMKYAIRKLDDTEFRNPWARGFIRVKKYESSRSRSRSPSRSRSRSRSRSRSRGRGRSHSRSRSLSRSKSPRKDLSKSPRRSLSRSISKSRSPSPDKKKSPPRAMSRSKSRSRSRSRSPSKSPPKVREGSV.

The region spanning 7 to 82 is the RRM 1 domain; that stretch reads RSIYVGNLPG…CRLRVELAHG (76 aa). Disordered stretches follow at residues 81-110 and 198-300; these read HGGRGQSSSDRRGGYGGGGSGYGGGGGGGG and YESS…EGSV. Gly residues predominate over residues 94–110; that stretch reads GYGGGGSGYGGGGGGGG. One can recognise an RRM 2 domain in the interval 122-200; that stretch reads FRVIVRGLPS…GFIRVKKYES (79 aa). Over residues 203 to 239 the composition is skewed to basic residues; sequence SRSRSPSRSRSRSRSRSRSRGRGRSHSRSRSLSRSKS. Phosphoserine is present on residues S207, S209, S231, S233, S239, S259, S275, and S285. A compositionally biased stretch (low complexity) spans 253 to 262; it reads SRSISKSRSP. The segment covering 275-287 has biased composition (basic residues); sequence SRSKSRSRSRSRS.

Belongs to the splicing factor SR family. SR subfamily. Component of the spliceosome.

Its subcellular location is the nucleus speckle. The protein resides in the nucleus. The protein localises to the nucleoplasm. Its function is as follows. Probably involved in intron recognition and spliceosome assembly. This is Serine/arginine-rich splicing factor SR34A (SR34A) from Arabidopsis thaliana (Mouse-ear cress).